Reading from the N-terminus, the 202-residue chain is FMN-dependent NADH:quinone oxidoreductase (202 aa).

Residues Ser-9 and 95–98 (MYNF) contribute to the FMN site.

Belongs to the azoreductase type 1 family. As to quaternary structure, homodimer. The cofactor is FMN.

It carries out the reaction 2 a quinone + NADH + H(+) = 2 a 1,4-benzosemiquinone + NAD(+). The catalysed reaction is N,N-dimethyl-1,4-phenylenediamine + anthranilate + 2 NAD(+) = 2-(4-dimethylaminophenyl)diazenylbenzoate + 2 NADH + 2 H(+). Its function is as follows. Quinone reductase that provides resistance to thiol-specific stress caused by electrophilic quinones. Also exhibits azoreductase activity. Catalyzes the reductive cleavage of the azo bond in aromatic azo compounds to the corresponding amines. The polypeptide is FMN-dependent NADH:quinone oxidoreductase (Chromobacterium violaceum (strain ATCC 12472 / DSM 30191 / JCM 1249 / CCUG 213 / NBRC 12614 / NCIMB 9131 / NCTC 9757 / MK)).